The primary structure comprises 164 residues: MIILGIDPGIAILGYGIVKYEGNKFKVIDYGAIKTSSKMATPQRLKEIYLRLDELISEYQPDAVAIEELFFNTNTTTAMVVSHARGVAVLAAAIHEKEIYEYTPLQVKQAVVGYGRAEKKQVQQMIKILLNLEQAPKPDDVADALAVAVCHAHSGHFQSLFKVK.

Active-site residues include aspartate 7, glutamate 67, and aspartate 140. Residues aspartate 7, glutamate 67, and aspartate 140 each contribute to the Mg(2+) site.

It belongs to the RuvC family. Homodimer which binds Holliday junction (HJ) DNA. The HJ becomes 2-fold symmetrical on binding to RuvC with unstacked arms; it has a different conformation from HJ DNA in complex with RuvA. In the full resolvosome a probable DNA-RuvA(4)-RuvB(12)-RuvC(2) complex forms which resolves the HJ. Requires Mg(2+) as cofactor.

It localises to the cytoplasm. The enzyme catalyses Endonucleolytic cleavage at a junction such as a reciprocal single-stranded crossover between two homologous DNA duplexes (Holliday junction).. Its function is as follows. The RuvA-RuvB-RuvC complex processes Holliday junction (HJ) DNA during genetic recombination and DNA repair. Endonuclease that resolves HJ intermediates. Cleaves cruciform DNA by making single-stranded nicks across the HJ at symmetrical positions within the homologous arms, yielding a 5'-phosphate and a 3'-hydroxyl group; requires a central core of homology in the junction. The consensus cleavage sequence is 5'-(A/T)TT(C/G)-3'. Cleavage occurs on the 3'-side of the TT dinucleotide at the point of strand exchange. HJ branch migration catalyzed by RuvA-RuvB allows RuvC to scan DNA until it finds its consensus sequence, where it cleaves and resolves the cruciform DNA. The polypeptide is Crossover junction endodeoxyribonuclease RuvC (Alkaliphilus metalliredigens (strain QYMF)).